The sequence spans 253 residues: 3-deoxy-manno-octulosonate cytidylyltransferase (253 aa).

Belongs to the KdsB family.

The protein localises to the cytoplasm. The enzyme catalyses 3-deoxy-alpha-D-manno-oct-2-ulosonate + CTP = CMP-3-deoxy-beta-D-manno-octulosonate + diphosphate. It participates in nucleotide-sugar biosynthesis; CMP-3-deoxy-D-manno-octulosonate biosynthesis; CMP-3-deoxy-D-manno-octulosonate from 3-deoxy-D-manno-octulosonate and CTP: step 1/1. The protein operates within bacterial outer membrane biogenesis; lipopolysaccharide biosynthesis. Functionally, activates KDO (a required 8-carbon sugar) for incorporation into bacterial lipopolysaccharide in Gram-negative bacteria. This chain is 3-deoxy-manno-octulosonate cytidylyltransferase, found in Proteus mirabilis (strain HI4320).